The primary structure comprises 323 residues: Beta-ketoacyl-[acyl-carrier-protein] synthase III (323 aa).

Catalysis depends on residues C113 and H250. Residues 251 to 255 are ACP-binding; the sequence is QANKR. N280 is an active-site residue.

This sequence belongs to the thiolase-like superfamily. FabH family. Homodimer.

Its subcellular location is the cytoplasm. The enzyme catalyses malonyl-[ACP] + acetyl-CoA + H(+) = 3-oxobutanoyl-[ACP] + CO2 + CoA. The protein operates within lipid metabolism; fatty acid biosynthesis. In terms of biological role, catalyzes the condensation reaction of fatty acid synthesis by the addition to an acyl acceptor of two carbons from malonyl-ACP. Catalyzes the first condensation reaction which initiates fatty acid synthesis and may therefore play a role in governing the total rate of fatty acid production. Possesses both acetoacetyl-ACP synthase and acetyl transacylase activities. Its substrate specificity determines the biosynthesis of branched-chain and/or straight-chain of fatty acids. The chain is Beta-ketoacyl-[acyl-carrier-protein] synthase III from Brucella suis (strain ATCC 23445 / NCTC 10510).